Reading from the N-terminus, the 25-residue chain is C-type natriuretic peptide (25 aa).

An intrachain disulfide couples Cys-9 to Cys-25.

As to expression, venom gland.

Its subcellular location is the secreted. Functionally, snake venom natriuretic peptide that has a vasorelaxant activity in rat aortic strips and a diuretic potency in anesthetized rats. May act by activating natriuretic receptors (NPR1 and/or NPR2). The sequence is that of C-type natriuretic peptide from Crotalus atrox (Western diamondback rattlesnake).